Reading from the N-terminus, the 329-residue chain is Phosphoenolpyruvate transferase (329 aa).

Position 61 (D61) interacts with 7,8-didemethyl-8-hydroxy-5-deazariboflavin.

This sequence belongs to the CofD family. As to quaternary structure, homodimer. Requires Mg(2+) as cofactor.

It carries out the reaction enolpyruvoyl-2-diphospho-5'-guanosine + 7,8-didemethyl-8-hydroxy-5-deazariboflavin = dehydro coenzyme F420-0 + GMP + H(+). It participates in cofactor biosynthesis; coenzyme F420 biosynthesis. Catalyzes the transfer of the phosphoenolpyruvate moiety from enoylpyruvoyl-2-diphospho-5'-guanosine (EPPG) to 7,8-didemethyl-8-hydroxy-5-deazariboflavin (FO) with the formation of dehydro coenzyme F420-0 and GMP. The sequence is that of Phosphoenolpyruvate transferase from Mycobacterium marinum (strain ATCC BAA-535 / M).